A 1006-amino-acid polypeptide reads, in one-letter code: GATA zinc finger domain-containing protein 7 (1006 aa).

A compositionally biased stretch (low complexity) spans 55–70; the sequence is SSSNNFINNHHNNQSS. 5 disordered regions span residues 55-116, 128-248, 381-499, 528-638, and 657-800; these read SSSN…APNL, PFQN…DPFY, NAKK…PLST, STSG…SSNS, and YNSN…NYHD. Residues 71 to 86 are compositionally biased toward polar residues; it reads DIHSISQSTPNLSTLI. Low complexity-rich tracts occupy residues 87–110 and 128–158; these read SSSS…NSSS and PFQN…CNNS. A compositionally biased stretch (polar residues) spans 159–168; it reads PVSSSTNYIP. Low complexity predominate over residues 169 to 180; it reads NNSTSNVVLNSS. Polar residues predominate over residues 181–190; that stretch reads IPTTSPNVLS. Low complexity-rich tracts occupy residues 205–241 and 388–410; these read NNNN…NNNN and TNTN…NNNN. A compositionally biased stretch (polar residues) spans 411–426; it reads IQQANVNTSPISTSTT. 2 stretches are compositionally biased toward low complexity: residues 427 to 456 and 468 to 496; these read PNNN…QQAQ and SITP…GASP. Positions 528-539 are enriched in polar residues; it reads STSGMLSTTNPY. The segment covering 540 to 557 has biased composition (low complexity); that stretch reads THHSPNTSSTVSSSVTSP. Over residues 558 to 589 the composition is skewed to polar residues; sequence LINQYGTNPTLTNNHSFYGSLASNQNTGASDG. Composition is skewed to low complexity over residues 590 to 601 and 619 to 638; these read NNNNNNNNNNNN and SSNP…SSNS. Residues 662–680 are compositionally biased toward polar residues; the sequence is GSGMTTPQSLGHSPSHNDY. Composition is skewed to low complexity over residues 681–706 and 713–785; these read NSNN…NSNN and SNSS…SSNN. Residues 842-867 form a GATA-type zinc finger; it reads CHNCGTKNTPEWRRGPSGPATLCNAC. The tract at residues 925–957 is disordered; it reads NNASSSSSSSSSSSSSSSSSSSTSSYSSSSYNI. The segment covering 928 to 954 has biased composition (low complexity); it reads SSSSSSSSSSSSSSSSSSSTSSYSSSS.

In Dictyostelium discoideum (Social amoeba), this protein is GATA zinc finger domain-containing protein 7 (gtaG).